The sequence spans 453 residues: Chromosomal replication initiator protein DnaA (453 aa).

The segment at 1–74 (MKEKQFWNRI…GFEIYDAEIT (74 aa)) is domain I, interacts with DnaA modulators. The segment at 74-113 (TPHYIFTKPQDTTSSQVEEATNLTLYNYSPKLVSIPYSDT) is domain II. A domain III, AAA+ region region spans residues 114 to 331 (GLKEKYTFDN…GAINDITLIA (218 aa)). The ATP site is built by Gly-158, Gly-160, Lys-161, and Thr-162. The interval 332–453 (RVKKIKDITI…EIESIKKKIK (122 aa)) is domain IV, binds dsDNA.

It belongs to the DnaA family. Oligomerizes as a right-handed, spiral filament on DNA at oriC.

It localises to the cytoplasm. Its function is as follows. Plays an essential role in the initiation and regulation of chromosomal replication. ATP-DnaA binds to the origin of replication (oriC) to initiate formation of the DNA replication initiation complex once per cell cycle. Binds the DnaA box (a 9 base pair repeat at the origin) and separates the double-stranded (ds)DNA. Forms a right-handed helical filament on oriC DNA; dsDNA binds to the exterior of the filament while single-stranded (ss)DNA is stabiized in the filament's interior. The ATP-DnaA-oriC complex binds and stabilizes one strand of the AT-rich DNA unwinding element (DUE), permitting loading of DNA polymerase. After initiation quickly degrades to an ADP-DnaA complex that is not apt for DNA replication. Binds acidic phospholipids. The protein is Chromosomal replication initiator protein DnaA of Streptococcus pneumoniae serotype 19F (strain G54).